The chain runs to 229 residues: Putative N-acetylmannosamine-6-phosphate 2-epimerase (229 aa).

It belongs to the NanE family.

The enzyme catalyses an N-acyl-D-glucosamine 6-phosphate = an N-acyl-D-mannosamine 6-phosphate. It functions in the pathway amino-sugar metabolism; N-acetylneuraminate degradation; D-fructose 6-phosphate from N-acetylneuraminate: step 3/5. Functionally, converts N-acetylmannosamine-6-phosphate (ManNAc-6-P) to N-acetylglucosamine-6-phosphate (GlcNAc-6-P). The sequence is that of Putative N-acetylmannosamine-6-phosphate 2-epimerase from Haemophilus ducreyi (strain 35000HP / ATCC 700724).